A 146-amino-acid polypeptide reads, in one-letter code: Hut operon positive regulatory protein (146 aa).

It belongs to the HutP family. Homohexamer.

Functionally, antiterminator that binds to cis-acting regulatory sequences on the mRNA in the presence of histidine, thereby suppressing transcription termination and activating the hut operon for histidine utilization. The protein is Hut operon positive regulatory protein of Bacillus anthracis (strain CDC 684 / NRRL 3495).